Consider the following 211-residue polypeptide: Arginine exporter protein ArgO (211 aa).

The next 6 helical transmembrane spans lie at 1–21, 37–57, 68–88, 111–131, 147–167, and 179–199; these read MFTY…PLGP, LMIA…GIFG, LLAL…FGAL, IIIT…DTFV, WFAL…ALLA, and AQRI…FQLA.

Belongs to the LysE/ArgO transporter (TC 2.A.75) family.

The protein localises to the cell inner membrane. It carries out the reaction L-arginine(in) = L-arginine(out). Its function is as follows. Involved in the export of arginine. Important to control the intracellular level of arginine and the correct balance between arginine and lysine. The polypeptide is Arginine exporter protein ArgO (Klebsiella pneumoniae subsp. pneumoniae (strain ATCC 700721 / MGH 78578)).